We begin with the raw amino-acid sequence, 525 residues long: Peptide chain release factor 3 (525 aa).

Residues 9–276 enclose the tr-type G domain; the sequence is AKRRTFAIIS…GFTRYAPAPQ (268 aa). Residues 18-25, 86-90, and 140-143 each bind GTP; these read SHPDAGKT, DTPGH, and NKFD.

Belongs to the TRAFAC class translation factor GTPase superfamily. Classic translation factor GTPase family. PrfC subfamily.

The protein localises to the cytoplasm. In terms of biological role, increases the formation of ribosomal termination complexes and stimulates activities of RF-1 and RF-2. It binds guanine nucleotides and has strong preference for UGA stop codons. It may interact directly with the ribosome. The stimulation of RF-1 and RF-2 is significantly reduced by GTP and GDP, but not by GMP. The sequence is that of Peptide chain release factor 3 from Francisella tularensis subsp. tularensis (strain WY96-3418).